The following is a 398-amino-acid chain: KiSS-1 receptor (398 aa).

Topologically, residues 1 to 46 (MHTVATSGPNASWGAPANASGCPGCGANASDGPVPSPRAVDAWLVP) are extracellular. N-linked (GlcNAc...) asparagine glycosylation is found at N10, N18, and N28. Residues 47 to 67 (LFFAALMLLGLVGNSLVIYVI) traverse the membrane as a helical segment. Over 68–78 (CRHKPMRTVTN) the chain is Cytoplasmic. The chain crosses the membrane as a helical span at residues 79-101 (FYIANLAATDVTFLLCCVPFTAL). Over 102–120 (LYPLPGWVLGDFMCKFVNY) the chain is Extracellular. Residues C115 and C191 are joined by a disulfide bond. A helical membrane pass occupies residues 121-138 (IQQVSVQATCATLTAMSV). Topologically, residues 139-157 (DRWYVTVFPLRALHRRTPR) are cytoplasmic. The chain crosses the membrane as a helical span at residues 158 to 178 (LALAVSLSIWVGSAAVSAPVL). The Extracellular portion of the chain corresponds to 179-202 (ALHRLSPGPRAYCSEAFPSRALER). Residues 203-223 (AFALYNLLALYLLPLLATCAC) form a helical membrane-spanning segment. Residues 224 to 263 (YAAMLRHLGRVAVRPAPADSALQGQVLAERAGAVRAKVSR) lie on the Cytoplasmic side of the membrane. The helical transmembrane segment at 264 to 284 (LVAAVVLLFAACWGPIQLFLV) threads the bilayer. The Extracellular portion of the chain corresponds to 285–305 (LQALGPAGSWHPRSYAAYALK). The chain crosses the membrane as a helical span at residues 306–328 (TWAHCMSYSNSALNPLLYAFLGS). Residues 329-398 (HFRQAFRRVC…CVLGEDNAPL (70 aa)) lie on the Cytoplasmic side of the membrane. The interval 341-363 (APRRPRRPRRPGPSDPAAPHAEL) is disordered.

The protein belongs to the G-protein coupled receptor 1 family. Most highly expressed in the pancreas, placenta and spinal cord, with lower-level of expression in peripheral blood leukocytes, kidney, lung, fetal liver, stomach, small intestine, testes, spleen, thymus, adrenal glands and lymph nodes. In the adult brain, expressed in the superior frontal gyrus, putamen, caudate nucleus, cingulate gyrus, nucleus accumbens, hippocampus, pons and amygdala, as well as the hypothalamus and pituitary. Expression levels are higher in early (7-9 weeks) than term placentas. Expression levels were increased in both early placentas and molar pregnancies and were reduced in choriocarcinoma cells. Expressed at higher levels in first trimester trophoblasts than at term of gestation. Also found in the extravillous trophoblast suggesting endocrine/paracrine activation mechanism.

The protein resides in the cell membrane. In terms of biological role, receptor for metastin (kisspeptin-54 or kp-54), a C-terminally amidated peptide of KiSS1. KiSS1 is a metastasis suppressor protein that suppresses metastases in malignant melanomas and in some breast carcinomas without affecting tumorigenicity. The metastasis suppressor properties may be mediated in part by cell cycle arrest and induction of apoptosis in malignant cells. The receptor is essential for normal gonadotropin-released hormone physiology and for puberty. The hypothalamic KiSS1/KISS1R system is a pivotal factor in central regulation of the gonadotropic axis at puberty and in adulthood. The receptor is also probably involved in the regulation and fine-tuning of trophoblast invasion generated by the trophoblast itself. Analysis of the transduction pathways activated by the receptor identifies coupling to phospholipase C and intracellular calcium release through pertussis toxin-insensitive G(q) proteins. In Homo sapiens (Human), this protein is KiSS-1 receptor (KISS1R).